The sequence spans 172 residues: Envelope protein UL45 (172 aa).

Over 1–27 (MPLRASEHAYRPLGPGTPPMRARLPAA) the chain is Intravirion. Residues 28-48 (AWVGVGTIIGGVVIIAALVLV) traverse the membrane as a helical; Signal-anchor for type II membrane protein segment. Residues 49 to 172 (PSRASWALSP…TSTRNALGLP (124 aa)) are Virion surface-facing.

It belongs to the herpesviridae HHV-1 UL45 family.

It localises to the virion membrane. In terms of biological role, important virulence factor of HSV neurotropism. Seems to be required for glycoprotein B-induced fusion. Dispensable for growth in vitro. The chain is Envelope protein UL45 from Human herpesvirus 1 (strain KOS) (HHV-1).